A 1215-amino-acid chain; its full sequence is Chromosome segregation protein sudA (1215 aa).

Position 32–39 (32–39 (GRNGSGKS)) interacts with ATP. Residues 177 to 522 (KIMHETNSKR…LSQMMDHNTS (346 aa)) are a coiled coil. The interval 313 to 332 (SDNQAAAQESKARHDESLKA) is disordered. The SMC hinge domain occupies 538–650 (EGVYGTLAEL…PNLQVASQYA (113 aa)). Residues 654 to 676 (GVNATTPEGDRSDKRGALTGGFH) form a disordered region. A coiled-coil region spans residues 684 to 1091 (DAVKNLAKWR…EEAKHSVENY (408 aa)).

This sequence belongs to the SMC family. SMC3 subfamily.

The protein resides in the nucleus. Its function is as follows. Involved in chromosome segregation in mitosis. The polypeptide is Chromosome segregation protein sudA (sudA) (Emericella nidulans (strain FGSC A4 / ATCC 38163 / CBS 112.46 / NRRL 194 / M139) (Aspergillus nidulans)).